Consider the following 496-residue polypeptide: Membrane-bound lytic murein transglycosylase F (496 aa).

Positions Met1 to Cys31 are cleaved as a signal peptide. A non-LT domain region spans residues Asp32–Val271. The tract at residues Asn273–Arg496 is LT domain. Glu316 is a catalytic residue. A disordered region spans residues His464–Val485.

This sequence in the N-terminal section; belongs to the bacterial solute-binding protein 3 family. It in the C-terminal section; belongs to the transglycosylase Slt family.

The protein resides in the cell outer membrane. It catalyses the reaction Exolytic cleavage of the (1-&gt;4)-beta-glycosidic linkage between N-acetylmuramic acid (MurNAc) and N-acetylglucosamine (GlcNAc) residues in peptidoglycan, from either the reducing or the non-reducing ends of the peptidoglycan chains, with concomitant formation of a 1,6-anhydrobond in the MurNAc residue.. Its function is as follows. Murein-degrading enzyme that degrades murein glycan strands and insoluble, high-molecular weight murein sacculi, with the concomitant formation of a 1,6-anhydromuramoyl product. Lytic transglycosylases (LTs) play an integral role in the metabolism of the peptidoglycan (PG) sacculus. Their lytic action creates space within the PG sacculus to allow for its expansion as well as for the insertion of various structures such as secretion systems and flagella. In Aeromonas salmonicida (strain A449), this protein is Membrane-bound lytic murein transglycosylase F.